The sequence spans 245 residues: Protein ARV 1 (245 aa).

Helical transmembrane passes span 70–90 (INPATVNIQHLLWKLVFAYLL), 117–137 (IKVLIGVLSANAAFIISFAIA), 163–183 (IFLLAMLVWEFPMSVIFFVDI), 200–220 (TMTRCIAVCLIAHLIRFLVGQ), and 224–244 (PTIFLIQIGSLLQYMSYFFRI).

Belongs to the ARV1 family. In terms of tissue distribution, restricted to tissues in which cells are actively dividing or expanding. Mostly expressed in roots and flowers, and, to a lower extent, in stems and leaves.

The protein resides in the endoplasmic reticulum membrane. Its function is as follows. Mediator of sterol homeostasis involved in sterol uptake, trafficking and distribution into membranes. Also regulates the sphingolipid metabolism. This is Protein ARV 1 from Arabidopsis thaliana (Mouse-ear cress).